The primary structure comprises 687 residues: Adhesion G-protein coupled receptor G1 (687 aa).

Residues 1–25 (MTAQSLLQTTLFLLSLLFLVQGAHG) form the signal peptide. Residue 26–33 (RGHREDFR) participates in heparin binding. The Extracellular segment spans residues 26-402 (RGHREDFRFC…VEVDAVHKHY (377 aa)). 2 disulfides stabilise this stretch: Cys-35/Cys-91 and Cys-121/Cys-177. Residues Asn-39, Asn-148, Asn-156, and Asn-171 are each glycosylated (N-linked (GlcNAc...) asparagine). Residue 190-200 (LKHPQKASRRP) participates in heparin binding. The region spanning 224–395 (DTVSFEEDRV…AVLMVSSVEV (172 aa)) is the GAIN-B domain. N-linked (GlcNAc...) asparagine glycans are attached at residues Asn-234, Asn-303, Asn-324, and Asn-341. 2 cysteine pairs are disulfide-bonded: Cys-346/Cys-377 and Cys-366/Cys-379. Residues 346 to 395 (CVFWVEDPTLSNPGRWSSAGCETVRRETQTSCFCNHLTYFAVLMVSSVEV) are GPS. Residues 384 to 397 (YFAVLMVSSVEVDA) are stachel. Residues 403–423 (LSLLSYVGCVVSALACVVTIA) traverse the membrane as a helical segment. Topologically, residues 424–442 (AYLCSRRKPRDYTIKVHMN) are cytoplasmic. The helical transmembrane segment at 443–463 (LLLAVFLLDVSFLLSEPVALT) threads the bilayer. At 464 to 470 (GSQSGCR) the chain is on the extracellular side. The helical transmembrane segment at 471–491 (ASAIFLHFSLLACLSWMGLEG) threads the bilayer. Residues 492-512 (YNLYRLVVEVFGTYIPGYLLK) lie on the Cytoplasmic side of the membrane. A helical transmembrane segment spans residues 513–533 (LSAMGWGFPIFLVTLVALVDV). The Extracellular portion of the chain corresponds to 534–570 (DNYGPIILAVHRTPESVIYPSMCWIRDSLVSYITNLG). Residues 571-591 (LFSLVFLFNMAMLGTMVVQIL) traverse the membrane as a helical segment. At 592 to 603 (RLRPHTQKWSHV) the chain is on the cytoplasmic side. Residues 604–624 (LTLLGLSLVLGLPWALIFFSF) traverse the membrane as a helical segment. The Extracellular segment spans residues 625-630 (ASGTFQ). The chain crosses the membrane as a helical span at residues 631-651 (LVVLYLFSIITSFQGFLIFLW). Over 652 to 687 (YWSMRLQARGGPSPLKSNSDSARLPISTGSTSSSRI) the chain is Cytoplasmic. A disordered region spans residues 664-687 (SPLKSNSDSARLPISTGSTSSSRI). Over residues 666–687 (LKSNSDSARLPISTGSTSSSRI) the composition is skewed to polar residues.

It belongs to the G-protein coupled receptor 2 family. LN-TM7 subfamily. As to quaternary structure, heterodimer of 2 chains generated by proteolytic processing; the large extracellular N-terminal fragment (ADGRG1 NT) and the membrane-bound C-terminal fragment (ADGRG1-CT) predominantly remain associated and non-covalently linked. ADGRG1 NT self-associates in a trans-trans manner; the homophilic interaction enhances receptor signaling. Interacts with TGM2. Interacts with heparin; leading to the reduction of ADGRG1 shedding. Interacts with COL3A1. Part of a GPCR-tetraspanin complex at least consisting of ADGRG1, CD81, eventually CD9, and GNA11 in which CD81 is enhancing the association of ADGRG1 with GNA11. In terms of processing, autoproteolytically cleaved into 2 fragments; the large extracellular N-terminal fragment (ADGRG1 NT) and the membrane-bound C-terminal fragment (ADGRG1 CT) predominantly remain associated and non-covalently linked. Shedding to yield the secreted ADGRG1 N-terminal fragment seems to involve metalloprotease(s). Ubiquitinated. Undergoes polyubiquitination upon activation.

Its subcellular location is the cell membrane. The protein resides in the secreted. It is found in the membrane raft. With respect to regulation, forms a heterodimer of 2 chains generated by proteolytic processing that remain associated through non-covalent interactions mediated by the GAIN-B domain. In the inactivated receptor, the Stachel sequence (also named stalk) is embedded in the GAIN-B domain, where it adopts a beta-strand conformation. On activation, the Stachel moves into the 7 transmembrane region and adopts a twisted hook-shaped configuration that forms contacts within the receptor, leading to coupling of a G-alpha protein, which activates signaling. The cleaved GAIN-B and N-terminal domains can then dissociate from the rest of the receptor. Its function is as follows. Adhesion G-protein coupled receptor (aGPCR) for steroid hormone 17alpha-hydroxypregnenolone (17-OH), which is involved in cell adhesion and cell-cell interactions. Ligand binding causes a conformation change that triggers signaling via guanine nucleotide-binding proteins (G proteins) and modulates the activity of downstream effectors, such as RhoA pathway. ADGRG1 is coupled to G(12) and/or G(13) G proteins (GNA12 and GNA13, respectively) and mediates the activation Rho small GTPases. Acts as a potent suppressor of ferroptosis: binding to 17-OH-binding initiates signaling that down-regulates CD36 and alleviates ferroptosis-induced liver injury. Ligand-binding also induces cell adhesion activity via association with proteins such as collagen III/COL3A1 and TGM2. Mediates cell matrix adhesion in developing neurons and hematopoietic stem cells. Involved in cortical development, specifically in maintenance of the pial basement membrane integrity and in cortical lamination: association with COL3A1 in the developing brain inhibits neuronal migration via activation of the RhoA pathway. Together with TGM2, acts as a regulator of myelination and myelin repair in oligodendrocyte precursor cells. Acts as a hemostatic sensor of shear force: G protein-coupled receptor signaling is activated in response to shear force in platelets, promoting G(13) G protein signaling, and platelet shape change and aggregation in a COL3A1-dependent manner. Acts as an inhibitor of VEGFA production thereby inhibiting angiogenesis through a signaling pathway mediated by PRKCA. Plays a role in the maintenance of hematopoietic stem cells in bone marrow niche. Plays an essential role in testis development. This Macaca mulatta (Rhesus macaque) protein is Adhesion G-protein coupled receptor G1 (ADGRG1).